The following is an 89-amino-acid chain: Cell division topological specificity factor (89 aa).

The protein belongs to the MinE family.

Its function is as follows. Prevents the cell division inhibition by proteins MinC and MinD at internal division sites while permitting inhibition at polar sites. This ensures cell division at the proper site by restricting the formation of a division septum at the midpoint of the long axis of the cell. This chain is Cell division topological specificity factor, found in Edwardsiella ictaluri (strain 93-146).